The following is a 945-amino-acid chain: Chaperone protein ClpD, chloroplastic (945 aa).

A chloroplast-targeting transit peptide spans 1 to 89 (MEVLSTSSPL…FERFTERAIR (89 aa)). Repeat regions lie at residues 90–146 (AIIF…WDEA) and 168–233 (FSIS…LKGE). The Clp R domain maps to 90–233 (AIIFSQKEAK…AAALTRLKGE (144 aa)). Residues 233–264 (EIAKDGREPSSSSKGSFESPPSGRIAGSGPGG) form a disordered region. Low complexity predominate over residues 241 to 255 (PSSSSKGSFESPPSG). Positions 271 to 523 (LEQFCVDLTA…RARIEAFRKK (253 aa)) are i. Residue 316–323 (GEAGVGKT) coordinates ATP. The disordered stretch occupies residues 555 to 586 (SRQKQDDGDAISDESGELVEESSLPPAAGDDE). A compositionally biased stretch (acidic residues) spans 562–574 (GDAISDESGELVE). Positions 590–781 (VGPDDIAAVA…LIIMTSNVGS (192 aa)) are II. ATP is bound at residue 664-671 (GPTGVGKT).

The protein belongs to the ClpA/ClpB family. ClpD subfamily. In terms of assembly, homodimer and homohexamer. Hexamerization upon addition of ATP. Interacts with CLPT1. Stably associated with the import machinery. Requires Mg(2+) as cofactor. In terms of tissue distribution, expressed in stems and leaves.

It localises to the plastid. The protein resides in the chloroplast stroma. It catalyses the reaction ATP + H2O = ADP + phosphate + H(+). Its function is as follows. Molecular chaperone that interact with a ClpP-like protease involved in degradation of denatured proteins in the chloroplast. The ATPase activity of CLPD is stimulated by CLPT1. Has no ADPase activity. Interacts with transit peptides with a positional preference. Localization of the signal sequence at the N-terminal end of a protein seems mandatory for interaction to take place. This Arabidopsis thaliana (Mouse-ear cress) protein is Chaperone protein ClpD, chloroplastic.